A 227-amino-acid polypeptide reads, in one-letter code: Acyl-protein thioesterase 1 (227 aa).

Catalysis depends on charge relay system residues S119, D173, and H207.

It belongs to the AB hydrolase superfamily. AB hydrolase 2 family.

The protein localises to the cytoplasm. Its subcellular location is the nucleus. The catalysed reaction is S-hexadecanoyl-L-cysteinyl-[protein] + H2O = L-cysteinyl-[protein] + hexadecanoate + H(+). Hydrolyzes fatty acids from S-acylated cysteine residues in proteins with a strong preference for palmitoylated G-alpha proteins over other acyl substrates. Mediates the deacylation of G-alpha proteins such as GPA1 in vivo, but has weak or no activity toward palmitoylated Ras proteins. Has weak lysophospholipase activity in vitro; however such activity may not exist in vivo. The chain is Acyl-protein thioesterase 1 from Saccharomyces cerevisiae (strain ATCC 204508 / S288c) (Baker's yeast).